Consider the following 390-residue polypeptide: S-adenosylmethionine synthase 1 (390 aa).

Residue E9 coordinates Mg(2+). Residue H15 participates in ATP binding. E43 is a binding site for K(+). L-methionine is bound by residues E56 and Q99. ATP is bound by residues 167–169 (DGK), 235–238 (SGRF), D246, 252–253 (RK), A269, K273, and K277. D246 is an L-methionine binding site. Residue K277 participates in L-methionine binding.

Belongs to the AdoMet synthase family. Homotetramer. Mn(2+) serves as cofactor. Requires Mg(2+) as cofactor. It depends on Co(2+) as a cofactor. The cofactor is K(+).

It is found in the cytoplasm. The catalysed reaction is L-methionine + ATP + H2O = S-adenosyl-L-methionine + phosphate + diphosphate. Its pathway is amino-acid biosynthesis; S-adenosyl-L-methionine biosynthesis; S-adenosyl-L-methionine from L-methionine: step 1/1. Its function is as follows. Catalyzes the formation of S-adenosylmethionine from methionine and ATP. The reaction comprises two steps that are both catalyzed by the same enzyme: formation of S-adenosylmethionine (AdoMet) and triphosphate, and subsequent hydrolysis of the triphosphate. In Petunia hybrida (Petunia), this protein is S-adenosylmethionine synthase 1 (SAM1).